We begin with the raw amino-acid sequence, 561 residues long: DNA ligase B (561 aa).

Catalysis depends on lysine 128, which acts as the N6-AMP-lysine intermediate.

Belongs to the NAD-dependent DNA ligase family. LigB subfamily.

It catalyses the reaction NAD(+) + (deoxyribonucleotide)n-3'-hydroxyl + 5'-phospho-(deoxyribonucleotide)m = (deoxyribonucleotide)n+m + AMP + beta-nicotinamide D-nucleotide.. Functionally, catalyzes the formation of phosphodiester linkages between 5'-phosphoryl and 3'-hydroxyl groups in double-stranded DNA using NAD as a coenzyme and as the energy source for the reaction. The polypeptide is DNA ligase B (Pseudomonas syringae pv. tomato (strain ATCC BAA-871 / DC3000)).